We begin with the raw amino-acid sequence, 284 residues long: MFKKFKPVTPGTRQLILPSFDELTTQGELKGSSSRRSVRPNKKLSFFKKSSGGRDNLGHISCRHRGGGVRRHYRVIDFKRNKDGIEAKVASVEYDPNRSAYIALLNYVDGEKRYILAPKGIKRGDRVISGEGSPFKTGCCMTLKSIPLGLSVHNVEMRPGSGGKLVRSAGLSAQIIAKTAGYVTLKMPSGEFRMLNEMCRATVGEVSNADHNLCVDGKAGRRRWKGIRPTVRGTAMNPVDHPHGGGEGRHNGYISQTPWGKVTKGLKTRDKRKSNKWIVKDRRK.

2 disordered regions span residues 28 to 50 and 232 to 284; these read ELKG…FKKS and RGTA…DRRK. A compositionally biased stretch (basic residues) spans 36–46; the sequence is RSVRPNKKLSF. Positions 240-250 are enriched in basic and acidic residues; sequence DHPHGGGEGRH. Positions 264–284 are enriched in basic residues; sequence KGLKTRDKRKSNKWIVKDRRK.

The protein belongs to the universal ribosomal protein uL2 family. As to quaternary structure, part of the 50S ribosomal subunit. Forms a bridge to the 30S subunit in the 70S ribosome.

In terms of biological role, one of the primary rRNA binding proteins. Required for association of the 30S and 50S subunits to form the 70S ribosome, for tRNA binding and peptide bond formation. It has been suggested to have peptidyltransferase activity; this is somewhat controversial. Makes several contacts with the 16S rRNA in the 70S ribosome. The sequence is that of Large ribosomal subunit protein uL2 from Chlamydia trachomatis serovar L2 (strain ATCC VR-902B / DSM 19102 / 434/Bu).